A 448-amino-acid chain; its full sequence is Probable ribonuclease FAU-1 (448 aa).

A disordered region spans residues 426-448 (EAPGGKICTSEGLTSALPQSSSA). Positions 436-448 (EGLTSALPQSSSA) are enriched in polar residues.

The protein belongs to the FAU-1 family.

Its function is as follows. Probable RNase involved in rRNA stability through maturation and/or degradation of precursor rRNAs. Binds to RNA in loop regions with AU-rich sequences. The sequence is that of Probable ribonuclease FAU-1 from Pyrobaculum islandicum (strain DSM 4184 / JCM 9189 / GEO3).